The chain runs to 99 residues: Large ribosomal subunit protein bL21 (99 aa).

Belongs to the bacterial ribosomal protein bL21 family. In terms of assembly, part of the 50S ribosomal subunit. Contacts protein L20.

Functionally, this protein binds to 23S rRNA in the presence of protein L20. The chain is Large ribosomal subunit protein bL21 from Deinococcus geothermalis (strain DSM 11300 / CIP 105573 / AG-3a).